Here is a 309-residue protein sequence, read N- to C-terminus: tRNA pseudouridine synthase B (309 aa).

Catalysis depends on D39, which acts as the Nucleophile.

This sequence belongs to the pseudouridine synthase TruB family. Type 1 subfamily.

It carries out the reaction uridine(55) in tRNA = pseudouridine(55) in tRNA. In terms of biological role, responsible for synthesis of pseudouridine from uracil-55 in the psi GC loop of transfer RNAs. This is tRNA pseudouridine synthase B from Bacillus pumilus (strain SAFR-032).